The primary structure comprises 137 residues: Nucleoside diphosphate kinase (137 aa).

Lys-9, Phe-57, Arg-85, Thr-91, Arg-102, and Asn-112 together coordinate ATP. His-115 serves as the catalytic Pros-phosphohistidine intermediate.

This sequence belongs to the NDK family. In terms of assembly, homotetramer. Mg(2+) is required as a cofactor.

The protein resides in the cytoplasm. It catalyses the reaction a 2'-deoxyribonucleoside 5'-diphosphate + ATP = a 2'-deoxyribonucleoside 5'-triphosphate + ADP. The catalysed reaction is a ribonucleoside 5'-diphosphate + ATP = a ribonucleoside 5'-triphosphate + ADP. Functionally, major role in the synthesis of nucleoside triphosphates other than ATP. The ATP gamma phosphate is transferred to the NDP beta phosphate via a ping-pong mechanism, using a phosphorylated active-site intermediate. This is Nucleoside diphosphate kinase from Campylobacter fetus subsp. fetus (strain 82-40).